The primary structure comprises 328 residues: Galactinol synthase 10 (328 aa).

K106 is an active-site residue. The Mn(2+) site is built by D122, D124, and H248.

The protein belongs to the glycosyltransferase 8 family. Galactosyltransferase subfamily. It depends on a divalent metal cation as a cofactor.

It is found in the cytoplasm. The catalysed reaction is myo-inositol + UDP-alpha-D-galactose = alpha-D-galactosyl-(1-&gt;3)-1D-myo-inositol + UDP + H(+). In terms of biological role, galactinol synthase involved in the biosynthesis of raffinose family oligosaccharides (RFOs) that function as osmoprotectants. May promote plant stress tolerance. This is Galactinol synthase 10 (GOLS10) from Arabidopsis thaliana (Mouse-ear cress).